Consider the following 101-residue polypeptide: Small ubiquitin-related modifier 5 (101 aa).

The Required for PML-NB formation motif lies at 17–21 (IKDED). A Glycyl lysine isopeptide (Lys-Gly) (interchain with G-Cter in SUMO1P1/SUMO5) cross-link involves residue lysine 18. The Ubiquitin-like domain occupies 20–97 (EDIKLRVIGQ…IEVYQEQIGG (78 aa)). Residue glycine 97 forms a Glycyl lysine isopeptide (Gly-Lys) (interchain with K-? in acceptor proteins) linkage. The propeptide occupies 98-101 (HSTV).

The protein belongs to the ubiquitin family. SUMO subfamily. In terms of assembly, interacts with CBX4. Interacts with PIAS1. Found in a complex with SAE2. Interacts with UBE2I. Interacts with SP100. Interacts with HIPK2. Interacts with DAXX. Interacts with PML-RARA oncoprotein; PML-RARalpha outcompetes PML for SUMO1P1/SUMO5 conjugation. Post-translationally, cleavage of precursor form is necessary for function. In terms of processing, autosumoylated at Lys-18. High expression levels in testes and peripheral blood leukocyte. Expressed also in lung, placenta, liver, spleen and thymus.

The protein localises to the nucleus. Functionally, ubiquitin-like protein that can be covalently attached to proteins as a monomer or as a lysine-linked polymer. Regulates the life cycle of promyelocytic leukemia nuclear bodies (PML-NBs). PolySUMO1P1/SUMO5 conjugation on 'Lys-160' of PML facilitates recruitment of PML-NB components, which enlarges PML-NB. SUMO1P1/SUMO5 also increases polySUMO2/3 conjugation of PML, resulting in RNF4-mediated disruption of PML-NBs. The protein is Small ubiquitin-related modifier 5 of Homo sapiens (Human).